The chain runs to 503 residues: Glycosyltransferase family 92 protein ZK381.2 (503 aa).

The chain crosses the membrane as a helical span at residues 7-27 (YKPCLLIILIFNSVILLFILI). In terms of domain architecture, GT92 spans 156–441 (KPVIICISPQ…FKCYFDSFYK (286 aa)).

The protein belongs to the glycosyltransferase 92 family.

It is found in the membrane. In Caenorhabditis elegans, this protein is Glycosyltransferase family 92 protein ZK381.2.